The chain runs to 159 residues: Style cell-cycle inhibitor 1 (159 aa).

The segment at 1–86 (MVSERSSKEK…SDHKLKEGIP (86 aa)) is disordered. Positions 15-50 (ARSEDSSSSDYEEKVKRHRGTEKDDERRSRRSDKKD) are enriched in basic and acidic residues. Residues 51-63 (KKSHKHHKSSTSK) show a composition bias toward basic residues. The segment covering 64–85 (KSKDDKPKKKHTESDHKLKEGI) has biased composition (basic and acidic residues).

The protein localises to the nucleus. In terms of biological role, component of the auxin signaling transduction pathway that regulates cell proliferation and differentiation during flowers stigmas and styles development. Involved in the regulation of auxin-related genes. The sequence is that of Style cell-cycle inhibitor 1 from Arabidopsis thaliana (Mouse-ear cress).